A 113-amino-acid chain; its full sequence is Nucleoid-associated protein CLH_3225 (113 aa).

The span at 1 to 14 (MAKGGFPGGFGGGN) shows a compositional bias: gly residues. A disordered region spans residues 1-31 (MAKGGFPGGFGGGNMNNLMKQAQKLQKQMED).

This sequence belongs to the YbaB/EbfC family. Homodimer.

It is found in the cytoplasm. The protein resides in the nucleoid. Its function is as follows. Binds to DNA and alters its conformation. May be involved in regulation of gene expression, nucleoid organization and DNA protection. This Clostridium botulinum (strain Alaska E43 / Type E3) protein is Nucleoid-associated protein CLH_3225.